We begin with the raw amino-acid sequence, 377 residues long: Gap junction gamma-1 protein (377 aa).

The Cytoplasmic segment spans residues Met-1 to Thr-18. Residues Phe-19 to Gly-39 form a helical membrane-spanning segment. Topologically, residues Gly-40–Arg-75 are extracellular. The chain crosses the membrane as a helical span at residues Phe-76 to Met-96. Residues His-97 to Lys-174 are Cytoplasmic-facing. Positions Asp-129–Gly-163 are disordered. Over residues Glu-131–Lys-151 the composition is skewed to acidic residues. A helical membrane pass occupies residues Val-175–Leu-197. At Tyr-198–Thr-228 the chain is on the extracellular side. The chain crosses the membrane as a helical span at residues Ile-229–Leu-249. Residues Phe-250–Leu-377 are Cytoplasmic-facing. 2 disordered regions span residues Lys-266 to Leu-286 and Ala-341 to Leu-377. Residues Ser-344 to Asn-362 show a composition bias toward polar residues.

It belongs to the connexin family. Gamma-type subfamily. As to quaternary structure, a connexon is composed of a hexamer of connexins.

The protein localises to the cell membrane. It localises to the cell junction. It is found in the gap junction. One gap junction consists of a cluster of closely packed pairs of transmembrane channels, the connexons, through which materials of low MW diffuse from one cell to a neighboring cell. The protein is Gap junction gamma-1 protein (gjc1) of Xenopus laevis (African clawed frog).